The following is a 354-amino-acid chain: MGPVSVLPSPQSLSTWEGDLAKMTHLQAGLSPDTIEKARLELNENPDILHQDIQQVRDMIITRPDIGFLRTDDAFILRFLRARKFHQADAFRLLAQYFQYRQLNLDMFKNFKADDPGIKRALIDGFPGVLENRDHYGRKILLLFAANWDQSRNSFTDILRAILLSLEVLIEDPELQINGFILIIDWSNFSFKQASKLTPSILKLAIEGLQDSFPARFGGVHFVNQPWYIHALYTLIKPFLKDKTRKRIFLHGNNLNSLHQLIHPEFLPSEFGGTLPPYDMGTWARTLLGPDYSDENDYTHTSYNAMHVKHTCSNLERECSPKPMKRSQSVVEAGTLKHEEKGENENTQPLLALD.

Residues 118 to 279 (IKRALIDGFP…EFGGTLPPYD (162 aa)) enclose the CRAL-TRIO domain. Positions 317 to 354 (RECSPKPMKRSQSVVEAGTLKHEEKGENENTQPLLALD) are disordered. The span at 335–344 (TLKHEEKGEN) shows a compositional bias: basic and acidic residues. Positions 345 to 354 (ENTQPLLALD) are enriched in polar residues.

In terms of assembly, forms a complex with clathrin heavy chain and gamma-adaptin.

The protein localises to the golgi apparatus. It localises to the trans-Golgi network membrane. Its subcellular location is the early endosome membrane. The protein resides in the cytoplasmic vesicle. It is found in the clathrin-coated vesicle. Functionally, required for normal morphology of late endosomes and/or lysosomes in neurons. Binds phosphatidylinositol 3,5-bisphosphate (PtdIns(3,5)P2). This Mus musculus (Mouse) protein is Clavesin-1 (Clvs1).